A 369-amino-acid chain; its full sequence is Flagellar P-ring protein (369 aa).

A signal peptide spans 1–23 (MRIASFFTVLLTLLTLNITPASA).

The protein belongs to the FlgI family. As to quaternary structure, the basal body constitutes a major portion of the flagellar organelle and consists of four rings (L,P,S, and M) mounted on a central rod.

It localises to the periplasm. The protein resides in the bacterial flagellum basal body. Functionally, assembles around the rod to form the L-ring and probably protects the motor/basal body from shearing forces during rotation. This chain is Flagellar P-ring protein, found in Pectobacterium atrosepticum (strain SCRI 1043 / ATCC BAA-672) (Erwinia carotovora subsp. atroseptica).